A 390-amino-acid polypeptide reads, in one-letter code: Leu/Ile/Val-binding protein homolog 6 (390 aa).

The N-terminal stretch at 1–21 is a signal peptide; that stretch reads MKKIALTALAVFSLAASAAYA.

Belongs to the leucine-binding protein family.

Component of an amino-acid transport system. This chain is Leu/Ile/Val-binding protein homolog 6, found in Brucella suis biovar 1 (strain 1330).